The chain runs to 288 residues: Dichloromethane dehalogenase (288 aa).

The region spanning 12–94 (KTLRLLYHPA…YVNEKFDGAG (83 aa)) is the GST N-terminal domain. The 153-residue stretch at 100–252 (GTQERAQINQ…ASMFKRKTAV (153 aa)) folds into the GST C-terminal domain.

Belongs to the GST superfamily. Homohexamer.

It localises to the cytoplasm. It catalyses the reaction dichloromethane + H2O = formaldehyde + 2 chloride + 2 H(+). The protein operates within xenobiotic degradation; dichloromethane degradation. The protein is Dichloromethane dehalogenase (dcmA) of Methylorubrum extorquens (strain DSM 6343 / CIP 106787 / DM4) (Methylobacterium extorquens).